The primary structure comprises 315 residues: 3-chlorobenzoate-3,4-dioxygenase reductase subunit (315 aa).

1-103 (MVAIDQHDTY…GATTRISAPR (103 aa)) is a binding site for FMN. Positions 7-109 (HDTYSVRVIS…SAPRNAFALD (103 aa)) constitute an FAD-binding FR-type domain. In terms of domain architecture, 2Fe-2S ferredoxin-type spans 228-315 (NEFTVNLARS…ALSPELTLDL (88 aa)). The [2Fe-2S] cluster site is built by Cys-264, Cys-269, Cys-272, and Cys-302.

This sequence belongs to the PDR/VanB family. As to quaternary structure, this dioxygenase system consists of two proteins: phthalate oxygenase and phthalate oxygenase reductase. Requires FMN as cofactor.

This Comamonas testosteroni (Pseudomonas testosteroni) protein is 3-chlorobenzoate-3,4-dioxygenase reductase subunit (cbaB).